Here is a 450-residue protein sequence, read N- to C-terminus: 23S rRNA (uracil(1939)-C(5))-methyltransferase RlmD (450 aa).

The TRAM domain maps to 12–70; it reads SKQLSAKLSLSVNQLDHLGAGIAQHQGKVVFIPGALPDETVTVQLTEQKKNYARAKLIK. The [4Fe-4S] cluster site is built by Cys-83, Cys-89, Cys-92, and Cys-171. Gln-283, Phe-312, Asn-317, Glu-333, Asp-360, and Asp-380 together coordinate S-adenosyl-L-methionine. Catalysis depends on Cys-406, which acts as the Nucleophile.

It belongs to the class I-like SAM-binding methyltransferase superfamily. RNA M5U methyltransferase family. RlmD subfamily.

The enzyme catalyses uridine(1939) in 23S rRNA + S-adenosyl-L-methionine = 5-methyluridine(1939) in 23S rRNA + S-adenosyl-L-homocysteine + H(+). Its function is as follows. Catalyzes the formation of 5-methyl-uridine at position 1939 (m5U1939) in 23S rRNA. The sequence is that of 23S rRNA (uracil(1939)-C(5))-methyltransferase RlmD from Shewanella baltica (strain OS195).